The following is a 451-amino-acid chain: Acetylornithine aminotransferase, mitochondrial (451 aa).

An N6-(pyridoxal phosphate)lysine modification is found at lysine 302.

This sequence belongs to the class-III pyridoxal-phosphate-dependent aminotransferase family. The cofactor is pyridoxal 5'-phosphate. Found at highest levels in nodules, confined to the infected cells.

It is found in the mitochondrion. It carries out the reaction N(2)-acetyl-L-ornithine + 2-oxoglutarate = N-acetyl-L-glutamate 5-semialdehyde + L-glutamate. It participates in amino-acid biosynthesis; L-arginine biosynthesis; N(2)-acetyl-L-ornithine from L-glutamate: step 4/4. Functionally, involved in the biosynthesis of citrulline. In Alnus glutinosa (European alder), this protein is Acetylornithine aminotransferase, mitochondrial (AG118).